A 263-amino-acid chain; its full sequence is Putative aliphatic sulfonates transport permease protein SsuC (263 aa).

The Cytoplasmic portion of the chain corresponds to 1–13 (MATPVKKWLLRVA). Residues 14 to 34 (PWFLPVGIVAVWQLASSVGWL) traverse the membrane as a helical segment. The Periplasmic segment spans residues 35–43 (STRILPSPE). A helical transmembrane segment spans residues 44–64 (GVVTAFWTLSASGELWQHLAI). The ABC transmembrane type-1 domain occupies 58–242 (LWQHLAISSW…LLGKLADVSA (185 aa)). At 65–68 (SSWR) the chain is on the cytoplasmic side. A helical membrane pass occupies residues 69–89 (ALIGFSIGGSLGLILGLISGL). At 90 to 102 (SRWGERLLDTSIQ) the chain is on the periplasmic side. A helical membrane pass occupies residues 103-122 (MLRNVPHLALIPLVILWFGI). Residues 123–125 (DES) lie on the Cytoplasmic side of the membrane. Residues 126–148 (AKIFLVALGTLFPIYINTWHGIR) form a helical membrane-spanning segment. The Periplasmic segment spans residues 149–164 (NIDRGLVEMARSYGLS). The helical transmembrane segment at 165-185 (GIPLFIHVILPGALPSIMVGV) threads the bilayer. Residues 186 to 187 (RF) lie on the Cytoplasmic side of the membrane. Residues 188 to 208 (ALGLMWLTLIVAETISANSGI) traverse the membrane as a helical segment. The Periplasmic segment spans residues 209-217 (GYLAMNARE). A helical membrane pass occupies residues 218 to 238 (FLQTDVVVVAIILYALLGKLA). Residues 239–263 (DVSAQLLERLWLRWNPAYHLKEATV) lie on the Cytoplasmic side of the membrane.

Belongs to the binding-protein-dependent transport system permease family. CysTW subfamily.

Its subcellular location is the cell inner membrane. In terms of biological role, part of a binding-protein-dependent transport system for aliphatic sulfonates. Probably responsible for the translocation of the substrate across the membrane. The sequence is that of Putative aliphatic sulfonates transport permease protein SsuC (ssuC) from Escherichia coli (strain K12).